A 356-amino-acid polypeptide reads, in one-letter code: Phosphate acyltransferase (356 aa).

Belongs to the PlsX family. As to quaternary structure, homodimer. Probably interacts with PlsY.

The protein localises to the cytoplasm. The enzyme catalyses a fatty acyl-[ACP] + phosphate = an acyl phosphate + holo-[ACP]. Its pathway is lipid metabolism; phospholipid metabolism. Its function is as follows. Catalyzes the reversible formation of acyl-phosphate (acyl-PO(4)) from acyl-[acyl-carrier-protein] (acyl-ACP). This enzyme utilizes acyl-ACP as fatty acyl donor, but not acyl-CoA. The sequence is that of Phosphate acyltransferase from Bartonella bacilliformis (strain ATCC 35685 / KC583 / Herrer 020/F12,63).